We begin with the raw amino-acid sequence, 212 residues long: 3,4-dihydroxy-2-butanone 4-phosphate synthase (212 aa).

D-ribulose 5-phosphate-binding positions include 37-38, Asp-42, 150-154, and Glu-174; these read RE and RRGHT. Glu-38 contributes to the Mg(2+) binding site. His-153 lines the Mg(2+) pocket.

This sequence belongs to the DHBP synthase family. Homodimer. It depends on Mg(2+) as a cofactor. Mn(2+) is required as a cofactor.

It catalyses the reaction D-ribulose 5-phosphate = (2S)-2-hydroxy-3-oxobutyl phosphate + formate + H(+). The protein operates within cofactor biosynthesis; riboflavin biosynthesis; 2-hydroxy-3-oxobutyl phosphate from D-ribulose 5-phosphate: step 1/1. Its function is as follows. Catalyzes the conversion of D-ribulose 5-phosphate to formate and 3,4-dihydroxy-2-butanone 4-phosphate. In Shewanella halifaxensis (strain HAW-EB4), this protein is 3,4-dihydroxy-2-butanone 4-phosphate synthase.